The chain runs to 1451 residues: ARF guanine-nucleotide exchange factor GNOM (1451 aa).

The tract at residues 1–246 (MGRLKLHSGI…VNRAGSIKQE (246 aa)) is DCB domain. Positions 557–752 (RRKYIKRRLM…NEIRTTPEQG (196 aa)) constitute an SEC7 domain. Glu-658 is a catalytic residue. The tract at residues 1430 to 1451 (SQLGDDETVSNGLSSPENTTGS) is disordered.

Homodimer. Interacts with CYP19-4/CYP5 in vitro. Stems, leaves, flowers, siliques, floral inflorescence and roots. Expressed in the whole plant (at the protein level).

It is found in the cytoplasm. The protein localises to the cytosol. The protein resides in the endosome membrane. It localises to the cell membrane. Its activity is regulated as follows. Inhibited by brefeldin A (BFA). Activates the ARF proteins by exchanging bound GDP for free GTP. Plays a role in vesicular protein sorting. Acts as the major regulator of endosomal vesicle trafficking but is also involved in the endocytosis process. Could function redundantly with GNL1 in the retrograde Golgi to endoplasmic reticulum trafficking. Regulates vesicle trafficking required for the coordinated polar localization of auxin efflux carriers which in turn determines the direction of auxin flow. Mediates the sorting of PIN1 from endosomal compartments to the basal plasma membrane and the polarization of PIN3 to the bottom side of hypocotyl endodermal cells. Involved in the specification of apical-basal pattern formation in the early embryo and during root formation. Required for correct cell wall organization leading to normal cell adhesion during seedling development. Also plays an essential role in hydrotropism of seedling roots. This Arabidopsis thaliana (Mouse-ear cress) protein is ARF guanine-nucleotide exchange factor GNOM (GN).